The sequence spans 82 residues: Sec-independent protein translocase protein TatA (82 aa).

A helical membrane pass occupies residues 1-21 (MGLSTTHLIIFLVIIVLIFGT).

The protein belongs to the TatA/E family. In terms of assembly, the Tat system comprises two distinct complexes: a TatABC complex, containing multiple copies of TatA, TatB and TatC subunits, and a separate TatA complex, containing only TatA subunits. Substrates initially bind to the TatABC complex, which probably triggers association of the separate TatA complex to form the active translocon.

The protein resides in the cell inner membrane. Its function is as follows. Part of the twin-arginine translocation (Tat) system that transports large folded proteins containing a characteristic twin-arginine motif in their signal peptide across membranes. TatA could form the protein-conducting channel of the Tat system. In Leptothrix cholodnii (strain ATCC 51168 / LMG 8142 / SP-6) (Leptothrix discophora (strain SP-6)), this protein is Sec-independent protein translocase protein TatA.